A 274-amino-acid polypeptide reads, in one-letter code: Rhamnulose-1-phosphate aldolase (274 aa).

Glu117 is an active-site residue. Residues His141, His143, and His212 each contribute to the Zn(2+) site.

This sequence belongs to the aldolase class II family. RhaD subfamily. In terms of assembly, homotetramer. Zn(2+) is required as a cofactor.

It is found in the cytoplasm. It catalyses the reaction L-rhamnulose 1-phosphate = (S)-lactaldehyde + dihydroxyacetone phosphate. It participates in carbohydrate degradation; L-rhamnose degradation; glycerone phosphate from L-rhamnose: step 3/3. Its function is as follows. Catalyzes the reversible cleavage of L-rhamnulose-1-phosphate to dihydroxyacetone phosphate (DHAP) and L-lactaldehyde. The polypeptide is Rhamnulose-1-phosphate aldolase (Shigella boydii serotype 4 (strain Sb227)).